A 434-amino-acid chain; its full sequence is UDP-N-acetylenolpyruvoylglucosamine reductase (434 aa).

The FAD-binding PCMH-type domain maps to 51-238; it reads IGAAPAGVVE…TAVEFQLTTD (188 aa). The active site involves R216. S299 functions as the Proton donor in the catalytic mechanism. E425 is an active-site residue.

It belongs to the MurB family. FAD is required as a cofactor.

The protein localises to the cytoplasm. It catalyses the reaction UDP-N-acetyl-alpha-D-muramate + NADP(+) = UDP-N-acetyl-3-O-(1-carboxyvinyl)-alpha-D-glucosamine + NADPH + H(+). It participates in cell wall biogenesis; peptidoglycan biosynthesis. Its function is as follows. Cell wall formation. The sequence is that of UDP-N-acetylenolpyruvoylglucosamine reductase from Corynebacterium jeikeium (strain K411).